The primary structure comprises 187 residues: High affinity copper uptake protein 1 (187 aa).

Residues 1-65 are Extracellular-facing; sequence MRMNHMEMHH…SSLVINTPGE (65 aa). The Bis-His motif signature appears at 9-10; sequence HH. The N-linked (GlcNAc...) asparagine glycan is linked to Asn-19. Residue Thr-30 is glycosylated (O-linked (GalNAc...) threonine). The helical transmembrane segment at 66–86 threads the bilayer; that stretch reads MAGAFVAVFLLAMFYEGLKIA. The Cytoplasmic segment spans residues 87–129; sequence REGLLRKSQVSIRYNSMPVPGPNGTILMETHKTVGQQMLSFPH. Thr-111 carries the phosphothreonine modification. The chain crosses the membrane as a helical span at residues 130-150; that stretch reads LLQTVLHIIQVVISYFLMLIF. Residues 151 to 153 are Extracellular-facing; the sequence is MTY. The chain crosses the membrane as a helical span at residues 154–174; it reads NGYLCIAVAAGAGTGYFLFSW. Topologically, residues 175-187 are cytoplasmic; sequence KKAVVVDITEHCH. Position 186 is a cysteine sulfenic acid (-SOH) (Cys-186).

This sequence belongs to the copper transporter (Ctr) (TC 1.A.56) family. SLC31A subfamily. Homotrimer; is stabilized by cisplatin via interactions between cisplatin and the methionine-rich clusters, and could be crucial for the copper(2+) reduction process and copper(1+) stabilization. Heterotrimer between SLC31A1, CCS and SOD1; this heterotrimer is copper(1+)-mediated and its maintenance is regulated through SOD1 activation. Interacts with KDR; this interaction is induced upon VEGFA stimulation leading to SLC31A1 and KDR subsequent co-internalization to early endosomes, thereby activating KDR downstream signaling in endothelial cells. Interacts (via C-terminal domain) with ATOX1 (via dimer form); this interaction improves ATOX1 stability and controls intracellular copper(1+) levels. Interacts with SLC31A2; this interaction stabilizes SLC31A2 and protects its from ubiquitination and degradation. Interacts (via C-terminal domain) with CCS; this interaction is copper(1+)-mediated. O-Glycosylation at Thr-30 protects from proteolytic cleavage in the N-terminal extracellular domain. Post-translationally, proteolytic cleavage, leading to a truncated form, is facilitated by SLC31A2 and initiated preferentially by CTSL and to a minor extend by CTSB in endolysosomal compartments. A post-CTSL/cathepsin L processing occurs to yield to the fully truncated form. In terms of processing, sulfenylated at Cys-186 after stimulation with VEGFA, which induces SLC31A1-KDR disulfide bond formation and their co-internalization to early endosomes, driving to a sustained VEGFR2 signaling.

Its subcellular location is the cell membrane. It localises to the early endosome membrane. The protein localises to the recycling endosome membrane. The protein resides in the apical cell membrane. It is found in the late endosome membrane. Its subcellular location is the basolateral cell membrane. The enzyme catalyses Cu(+)(out) = Cu(+)(in). It carries out the reaction Ag(+)(out) = Ag(+)(in). Its activity is regulated as follows. Copper uptake is inhibited by cold temperature, silver and zinc ions. Platinum-containing chemotherapeutic agents uptake is inhibited by cold temperature and copper. Uniporter that mediates the transport of copper(1+) from the extracellular space to the cytoplasm, across the plasma membrane. Then, delivers directly copper(1+) to specific chaperone such as ATOX1, via a copper(1+)- mediated transient interaction between the C-terminal domain and a copper(1+) chaperone, thus controlling intracellular copper(1+) levels. May function in copper(1+) import from the apical membrane thus may drive intestinal copper absorption. The copper(1+) transport mechanism is sodium-independent, saturable and of high-affinity. Also mediates the uptake of silver(1+). May function in the influx of the platinum-containing chemotherapeutic agents. The platinum-containing chemotherapeutic agents uptake is saturable. Also participates in the first step of copper(2+) acquisition by cells through a direct transfer of copper(2+) from copper(2+) carriers in blood, such as ALB to the N-terminal domain of SLC31A1, leading to copper(2+) reduction and probably followed by copper(1+) stabilization. In addition, functions as a redox sensor to promote angiogenesis in endothelial cells, in a copper(1+) transport independent manner, by transmitting the VEGF-induced ROS signal through a sulfenylation at Cys-189 leading to a subsequent disulfide bond formation between SLC31A1 and KDR. The SLC31A1-KDR complex is then co-internalized to early endosomes, driving a sustained VEGFR2 signaling. In terms of biological role, mobilizes copper(1+) out of the endosomal compartment, making copper(1+) available for export out of the cells. This is High affinity copper uptake protein 1 from Rattus norvegicus (Rat).